Consider the following 451-residue polypeptide: Midnolin-B (451 aa).

The Ubiquitin-like domain maps to 20–94 (MNLNIQSTTG…LTLLPSVEAG (75 aa)). Disordered regions lie at residues 187 to 254 (ASCT…RSRK), 331 to 372 (RNAK…QTEN), and 388 to 427 (QKRL…EGSL). Composition is skewed to low complexity over residues 190–205 (TPGS…TSST), 237–250 (STRG…SPSS), and 336–347 (TSPQSTGPQQTT). Positions 363–372 (SGDRLRQTEN) are enriched in basic and acidic residues. Residues 388 to 397 (QKRLRRKARR) show a composition bias toward basic residues. Residues 413–426 (RTSSNSSTSSGEGS) show a composition bias toward low complexity.

The protein localises to the nucleus. It is found in the cytoplasm. Its subcellular location is the cytosol. The protein resides in the nucleolus. Its function is as follows. Facilitates ubiquitin-independent proteasomal degradation of polycomb protein CBX4. Plays a role in inhibiting the activity of glucokinase GCK and both glucose-induced and basal insulin secretion. This chain is Midnolin-B (midn-b), found in Xenopus laevis (African clawed frog).